Consider the following 288-residue polypeptide: MFSWEASLSNELYFVRQYFYSGNYTKLFEIDTTSMSEKGLELTEIYMARAKLALGESLESIQSILTQKTPGSAAILALAGEGNMELIIDQHGNSDSVVQTLGAIFQIKNGSFDDAMDLLKKSVENLEAVALQVYIHLREHKIEAAEQTLKQALDWADEEIVLQLAQSWIKIVSGGVESYNDAFYVFEELNGTDSNPMTLTGMACADICLLRPEEALSSLKTALDSQPNYEEALSNMTTAITDLGPDAPSQAKNILSSFTNSSTLKLNDHLNEKAQEFDTFSTQFLSTA.

Ser-262 is subject to Phosphoserine.

The protein belongs to the COPE family. In terms of assembly, oligomeric complex that consists of at least the alpha, beta, beta', gamma, delta, epsilon and zeta subunits.

Its subcellular location is the cytoplasm. The protein resides in the golgi apparatus membrane. It is found in the cytoplasmic vesicle. The protein localises to the COPI-coated vesicle membrane. The coatomer is a cytosolic protein complex that binds to dilysine motifs and reversibly associates with Golgi non-clathrin-coated vesicles, which further mediate biosynthetic protein transport from the ER, via the Golgi up to the trans Golgi network. The coatomer complex is required for budding from Golgi membranes, and is essential for the retrograde Golgi-to-ER transport of dilysine-tagged proteins. This chain is Probable coatomer subunit epsilon (sec28), found in Schizosaccharomyces pombe (strain 972 / ATCC 24843) (Fission yeast).